Consider the following 392-residue polypeptide: Succinyl-diaminopimelate desuccinylase (392 aa).

A Zn(2+)-binding site is contributed by H76. D78 is an active-site residue. Residue D107 coordinates Zn(2+). Residue E143 is the Proton acceptor of the active site. Residues E144, E172, and H357 each contribute to the Zn(2+) site.

This sequence belongs to the peptidase M20A family. DapE subfamily. In terms of assembly, homodimer. Zn(2+) is required as a cofactor. It depends on Co(2+) as a cofactor.

The catalysed reaction is N-succinyl-(2S,6S)-2,6-diaminopimelate + H2O = (2S,6S)-2,6-diaminopimelate + succinate. The protein operates within amino-acid biosynthesis; L-lysine biosynthesis via DAP pathway; LL-2,6-diaminopimelate from (S)-tetrahydrodipicolinate (succinylase route): step 3/3. Catalyzes the hydrolysis of N-succinyl-L,L-diaminopimelic acid (SDAP), forming succinate and LL-2,6-diaminopimelate (DAP), an intermediate involved in the bacterial biosynthesis of lysine and meso-diaminopimelic acid, an essential component of bacterial cell walls. The protein is Succinyl-diaminopimelate desuccinylase of Helicobacter hepaticus (strain ATCC 51449 / 3B1).